Here is a 484-residue protein sequence, read N- to C-terminus: Regulatory protein ViaA (484 aa).

This sequence belongs to the ViaA family. Homodimer. Interacts with RavA.

The protein localises to the cytoplasm. In terms of biological role, component of the RavA-ViaA chaperone complex, which may act on the membrane to optimize the function of some of the respiratory chains. ViaA stimulates the ATPase activity of RavA. The protein is Regulatory protein ViaA of Edwardsiella ictaluri (strain 93-146).